The sequence spans 167 residues: Leukotoxin-activating lysine-acyltransferase LktC serotype T3 (167 aa).

Catalysis depends on residues His22 and Asp91.

Belongs to the RTX toxin acyltransferase family.

It is found in the cytoplasm. It carries out the reaction a fatty acyl-[ACP] + L-lysyl-[protein] = N(6)-(fatty acyl)-L-lysyl-[protein] + holo-[ACP] + H(+). Involved in fatty acylation of the protoxin (LktA) at two internal lysine residues, thereby converting it to the active toxin. The polypeptide is Leukotoxin-activating lysine-acyltransferase LktC serotype T3 (lktC) (Mannheimia haemolytica (Pasteurella haemolytica)).